The sequence spans 648 residues: ATPase family AAA domain-containing protein 3B (648 aa).

Disordered regions lie at residues 1–54 (MSWL…DPTG) and 111–134 (QAEE…QYQD). Residue Ser-2 is modified to N-acetylserine. Residues 2–246 (SWLFGVNKGP…FRAFVTDRDK (245 aa)) lie on the Mitochondrial intermembrane side of the membrane. Residues 17-26 (GPPPPLPPAQ) are compositionally biased toward pro residues. Basic and acidic residues-rich tracts occupy residues 32-48 (GGDR…DKWS) and 111-125 (QAEE…ETRQ). The stretch at 69-214 (RYAKEALNLA…DIIREQIRLK (146 aa)) forms a coiled coil. The helical intramembrane region spans 247-264 (VTATVAGLTLLAVGVYSA). Topologically, residues 265-648 (KNATAVTGRF…PFCPPGHPLL (384 aa)) are mitochondrial intermembrane. 352–359 (GPPGTGKT) contributes to the ATP binding site. N6-acetyllysine is present on residues Lys-427 and Lys-495.

Belongs to the AAA ATPase family. In terms of assembly, forms heterooligomers with ATAD3A. Interacts with components of the mitochondrial ribosome, including MRPL11 and MRPS18B, and with other proteins involved in mitochondrial RNA metabolism, possibly via interaction with ATAD3A. Interacts with GADD45GIP1. Tends to be down-regulated in differentiated cells and re-expressed in pluripotent stem cells or cancer cells (at protein level).

It is found in the mitochondrion inner membrane. Functionally, may play a role in a mitochondrial network organization typical for stem cells, characterized by reduced mitochondrial metabolism, low mtDNA copies and fragmentated mitochondrial network. May act by suppressing ATAD3A function, interfering with ATAD3A interaction with matrix nucleoid complexes. This is ATPase family AAA domain-containing protein 3B (ATAD3B) from Homo sapiens (Human).